The chain runs to 631 residues: VPS9 domain-containing protein 1 (631 aa).

S116 is modified (phosphoserine). Positions R187–R221 form a coiled coil. The segment at P318 to S379 is disordered. Over residues P337–S362 the composition is skewed to pro residues. Residues R467 to A630 form the VPS9 domain.

As to expression, ubiquitous.

This is VPS9 domain-containing protein 1 (VPS9D1) from Homo sapiens (Human).